Consider the following 84-residue polypeptide: Acyl-CoA-binding protein (84 aa).

One can recognise an ACB domain in the interval 1-84; the sequence is MTTFEEAAQK…LYEQLATKYA (84 aa). An acyl-CoA is bound by residues Lys-12, 27 to 31, Lys-53, and Tyr-72; that span reads YGLYK.

The protein belongs to the ACBP family. As to quaternary structure, interacts with dhkA.

Functionally, binds to acyl-CoA. Processed into the SDF-2 (spore differentiation factor 2) a peptide which triggers sporulation. SDF-2 appears to stimulate prestalk cells to release additional SDF-2 by acting through a signal transduction pathway that also involves dhkA, regA and PKA. Induces encapsulation of prespore cells in a dhkA-dependent manner. GABA induces the release of acbA from prespore cells and induces the exposure of tagC on the surface of prestalk cells where it can convert acbA to SDF-2. Glutamate acts as a competitive inhibitor and is also able to inhibit induction of sporulation by SDF-2. This is Acyl-CoA-binding protein (acbA) from Dictyostelium discoideum (Social amoeba).